The chain runs to 1157 residues: Hephaestin (1157 aa).

Positions 1-18 (MKAGHLLWALLLMHSLWS) are cleaved as a signal peptide. Over 19-1109 (IPTDGAIRNY…PIKDVEILSS (1091 aa)) the chain is Extracellular. Plastocyanin-like domains lie at 24–206 (AIRN…LITC), 218–366 (QRKD…VDSC), 370–559 (PPVD…LLVC), 569–717 (KQKG…VSQC), 730–902 (ASRV…LVIC), and 910–1066 (NGGR…SHEE). N49 and N54 each carry an N-linked (GlcNAc...) asparagine glycan. Positions 70 and 73 each coordinate Na(+). The Cu(2+) site is built by H126 and H128. H126 serves as a coordination point for O2. Ca(2+) contacts are provided by K134, D152, and D153. N164 carries an N-linked (GlcNAc...) asparagine glycan. An intrachain disulfide couples C180 to C206. Residues H186 and H188 each contribute to the Cu(2+) site. Position 186 (H186) interacts with O2. N236 carries N-linked (GlcNAc...) asparagine glycosylation. A Na(+)-binding site is contributed by S265. C285 and C366 are oxidised to a cystine. Residues H304, C347, and H352 each contribute to the Cu(2+) site. The Na(+) site is built by Y416, G425, and Y428. A disulfide bridge connects residues C533 and C559. N587 is a glycosylation site (N-linked (GlcNAc...) asparagine). Residue S616 participates in Na(+) binding. C636 and C717 are oxidised to a cystine. Residues H655, C698, H703, and M708 each contribute to the Cu(2+) site. N-linked (GlcNAc...) asparagine glycosylation is found at N713 and N757. The Na(+) site is built by F768 and G777. C876 and C902 form a disulfide bridge. N-linked (GlcNAc...) asparagine glycosylation is present at N930. H999, H1002, H1004, H1044, C1045, H1046, H1050, and M1055 together coordinate Cu(2+). Residues H1002 and H1004 each contribute to the O2 site. H1046 is a binding site for O2. The chain crosses the membrane as a helical span at residues 1110 to 1130 (ALIAICVLLLLIALALGGVVW). Residues 1131–1157 (YQHRQRKLRRNRRSILDDSFKLLSLKQ) lie on the Cytoplasmic side of the membrane. 3 positions are modified to phosphoserine: S1144, S1149, and S1154.

This sequence belongs to the multicopper oxidase family. As to quaternary structure, part of a complex composed of SLC40A1/ferroportin, TF/transferrin and HEPH/hephaestin that transfers iron from cells to transferrin. Requires Cu cation as cofactor.

The protein localises to the basolateral cell membrane. It catalyses the reaction 4 Fe(2+) + O2 + 4 H(+) = 4 Fe(3+) + 2 H2O. In terms of biological role, plasma membrane ferroxidase that mediates the extracellular conversion of ferrous/Fe(2+) iron into its ferric/Fe(3+) form. Couples ferroportin which specifically exports ferrous/Fe(2+) iron from cells to transferrin that only binds and shuttles extracellular ferric/Fe(3+) iron throughout the body. By helping iron transfer from cells to blood mainly contributes to dietary iron absorption by the intestinal epithelium and more generally regulates iron levels in the body. This chain is Hephaestin, found in Mus musculus (Mouse).